The sequence spans 137 residues: Large-conductance mechanosensitive channel (137 aa).

The next 4 helical transmembrane spans lie at 9–29 (AFAV…GAAF), 32–52 (IVSS…IGGV), 54–74 (FGDL…VVLA), and 79–99 (IQSI…VKVI).

The protein belongs to the MscL family. In terms of assembly, homopentamer.

The protein resides in the cell inner membrane. Functionally, channel that opens in response to stretch forces in the membrane lipid bilayer. May participate in the regulation of osmotic pressure changes within the cell. This Pseudomonas fluorescens (strain ATCC BAA-477 / NRRL B-23932 / Pf-5) protein is Large-conductance mechanosensitive channel.